The following is a 543-amino-acid chain: Chaperonin GroEL 1 (543 aa).

ATP-binding positions include 29-32 (TLGP), 86-90 (DGTTT), G413, 479-481 (NAA), and D495. Residues 524–543 (PEPKDAAPAGVGGGGGDFDY) are disordered. Gly residues predominate over residues 533 to 543 (GVGGGGGDFDY).

It belongs to the chaperonin (HSP60) family. In terms of assembly, forms a cylinder of 14 subunits composed of two heptameric rings stacked back-to-back. Interacts with the co-chaperonin GroES.

It is found in the cytoplasm. The catalysed reaction is ATP + H2O + a folded polypeptide = ADP + phosphate + an unfolded polypeptide.. In terms of biological role, together with its co-chaperonin GroES, plays an essential role in assisting protein folding. The GroEL-GroES system forms a nano-cage that allows encapsulation of the non-native substrate proteins and provides a physical environment optimized to promote and accelerate protein folding. The protein is Chaperonin GroEL 1 of Anabaena sp. (strain L31).